We begin with the raw amino-acid sequence, 147 residues long: Putative pre-16S rRNA nuclease (147 aa).

Belongs to the YqgF nuclease family.

It is found in the cytoplasm. Its function is as follows. Could be a nuclease involved in processing of the 5'-end of pre-16S rRNA. This is Putative pre-16S rRNA nuclease from Polynucleobacter necessarius subsp. necessarius (strain STIR1).